Reading from the N-terminus, the 136-residue chain is Large ribosomal subunit protein bL17 (136 aa).

The protein belongs to the bacterial ribosomal protein bL17 family. In terms of assembly, part of the 50S ribosomal subunit. Contacts protein L32.

The chain is Large ribosomal subunit protein bL17 from Rickettsia conorii (strain ATCC VR-613 / Malish 7).